The chain runs to 492 residues: Trypanothione reductase (492 aa).

An FAD-binding site is contributed by 36-52 (DVQMVHGPPFFSALGGT). Cys53 and Cys58 form a disulfide bridge. His461 functions as the Proton acceptor in the catalytic mechanism.

It belongs to the class-I pyridine nucleotide-disulfide oxidoreductase family. Homodimer. It depends on FAD as a cofactor.

The protein localises to the cytoplasm. The catalysed reaction is trypanothione + NADP(+) = trypanothione disulfide + NADPH + H(+). Trypanothione is the parasite analog of glutathione; this enzyme is the equivalent of glutathione reductase. The protein is Trypanothione reductase (TPR) of Trypanosoma cruzi.